The chain runs to 329 residues: Oligopeptide transport ATP-binding protein AppF (329 aa).

The ABC transporter domain occupies 10 to 261 (LELRDVKKYF…PLHPYTQALL (252 aa)). 53-60 (GESGCGKS) provides a ligand contact to ATP.

It belongs to the ABC transporter superfamily.

It is found in the cell membrane. In terms of biological role, this protein is a component of an oligopeptide permease, a binding protein-dependent transport system. This APP system can completely substitute for the OPP system in both sporulation and genetic competence, though, unlike OPP, is incapable of transporting tripeptides. Probably responsible for energy coupling to the transport system. This is Oligopeptide transport ATP-binding protein AppF (appF) from Bacillus subtilis (strain 168).